A 406-amino-acid chain; its full sequence is Succinylornithine transaminase (406 aa).

Residue Lys-252 is modified to N6-(pyridoxal phosphate)lysine.

Belongs to the class-III pyridoxal-phosphate-dependent aminotransferase family. AstC subfamily. Pyridoxal 5'-phosphate serves as cofactor.

The catalysed reaction is N(2)-succinyl-L-ornithine + 2-oxoglutarate = N-succinyl-L-glutamate 5-semialdehyde + L-glutamate. The protein operates within amino-acid degradation; L-arginine degradation via AST pathway; L-glutamate and succinate from L-arginine: step 3/5. Functionally, catalyzes the transamination of N(2)-succinylornithine and alpha-ketoglutarate into N(2)-succinylglutamate semialdehyde and glutamate. Can also act as an acetylornithine aminotransferase. This Escherichia coli O139:H28 (strain E24377A / ETEC) protein is Succinylornithine transaminase.